Reading from the N-terminus, the 33-residue chain is Photosystem II reaction center protein Psb30 (33 aa).

A helical membrane pass occupies residues Val-5–Leu-25.

Belongs to the Psb30/Ycf12 family. As to quaternary structure, PSII is composed of 1 copy each of membrane proteins PsbA, PsbB, PsbC, PsbD, PsbE, PsbF, PsbH, PsbI, PsbJ, PsbK, PsbL, PsbM, PsbT, PsbX, PsbY, PsbZ, Psb30/Ycf12, peripheral proteins of the oxygen-evolving complex and a large number of cofactors. It forms dimeric complexes.

It is found in the plastid. Its subcellular location is the chloroplast thylakoid membrane. Functionally, a core subunit of photosystem II (PSII), probably helps stabilize the reaction center. The protein is Photosystem II reaction center protein Psb30 of Oltmannsiellopsis viridis (Marine flagellate).